A 78-amino-acid polypeptide reads, in one-letter code: UPF0369 protein RP167 (78 aa).

It belongs to the SDHAF4 family.

This chain is UPF0369 protein RP167, found in Rickettsia prowazekii (strain Madrid E).